Reading from the N-terminus, the 497-residue chain is 3-octaprenyl-4-hydroxybenzoate carboxy-lyase (497 aa).

Asparagine 175 serves as a coordination point for Mn(2+). Prenylated FMN contacts are provided by residues 178 to 180, 192 to 194, and 197 to 198; these read IYR, RWL, and RG. Residue glutamate 241 coordinates Mn(2+). The active-site Proton donor is the aspartate 290.

The protein belongs to the UbiD family. Homohexamer. Requires prenylated FMN as cofactor. Mn(2+) is required as a cofactor.

The protein localises to the cell membrane. The enzyme catalyses a 4-hydroxy-3-(all-trans-polyprenyl)benzoate + H(+) = a 2-(all-trans-polyprenyl)phenol + CO2. It participates in cofactor biosynthesis; ubiquinone biosynthesis. Catalyzes the decarboxylation of 3-octaprenyl-4-hydroxy benzoate to 2-octaprenylphenol, an intermediate step in ubiquinone biosynthesis. The sequence is that of 3-octaprenyl-4-hydroxybenzoate carboxy-lyase from Escherichia coli O157:H7.